Consider the following 382-residue polypeptide: ATP phosphoribosyltransferase regulatory subunit (382 aa).

This sequence belongs to the class-II aminoacyl-tRNA synthetase family. HisZ subfamily. Heteromultimer composed of HisG and HisZ subunits.

It localises to the cytoplasm. Its pathway is amino-acid biosynthesis; L-histidine biosynthesis; L-histidine from 5-phospho-alpha-D-ribose 1-diphosphate: step 1/9. In terms of biological role, required for the first step of histidine biosynthesis. May allow the feedback regulation of ATP phosphoribosyltransferase activity by histidine. The protein is ATP phosphoribosyltransferase regulatory subunit of Burkholderia ambifaria (strain MC40-6).